The following is a 281-amino-acid chain: MLKIAIPNKGSLSEAAVEILAEAGYAGRGESKTLNVYDKTNDVEFFFLRPKDIAIYVAGGQLDLGITGRDLATDSHANVEEVMSLGFGNSSFRYAAPADQKWTVEMLEGKRIATSYPNLVRDDLQARGINATVIRLDGAVEISIKLGVADAIADVVSTGRTLRKQGLATFGEVICQSEAVIVGQQGNVVDNEQKVFLRRIEGILHAQNYLMLDYNIDRVNLAASEKITPGISGPTVSPLARENWVAVRAMVPRKEANHIMDQLSELGAQAILASEIRIARL.

This sequence belongs to the ATP phosphoribosyltransferase family. Long subfamily. Requires Mg(2+) as cofactor.

The protein resides in the cytoplasm. It carries out the reaction 1-(5-phospho-beta-D-ribosyl)-ATP + diphosphate = 5-phospho-alpha-D-ribose 1-diphosphate + ATP. Its pathway is amino-acid biosynthesis; L-histidine biosynthesis; L-histidine from 5-phospho-alpha-D-ribose 1-diphosphate: step 1/9. Its activity is regulated as follows. Feedback inhibited by histidine. Catalyzes the condensation of ATP and 5-phosphoribose 1-diphosphate to form N'-(5'-phosphoribosyl)-ATP (PR-ATP). Has a crucial role in the pathway because the rate of histidine biosynthesis seems to be controlled primarily by regulation of HisG enzymatic activity. In Corynebacterium diphtheriae (strain ATCC 700971 / NCTC 13129 / Biotype gravis), this protein is ATP phosphoribosyltransferase.